The chain runs to 2493 residues: Non-reducing polyketide synthase pkiA (2493 aa).

The tract at residues 129–243 (PLLMMTHFVQ…VQYDENRATI (115 aa)) is N-terminal acylcarrier protein transacylase domain (SAT). Residue cysteine 160 is the Nucleophile; for transacylase activity of the active site. Histidine 274 serves as the catalytic Proton donor/acceptor; for transacylase activity. One can recognise a Ketosynthase family 3 (KS3) domain in the interval 401 to 818 (ETDIAIVGMA…GSNASMVITQ (418 aa)). Residues cysteine 567, histidine 702, and histidine 741 each act as for beta-ketoacyl synthase activity in the active site. The tract at residues 926–1261 (CFGGQVGRSI…EYAPLLLPPY (336 aa)) is malonyl-CoA:ACP transacylase (MAT). An N-terminal hotdog fold region spans residues 1259-1387 (PPYQFERTRH…AHISMHDVRC (129 aa)). The 304-residue stretch at 1259–1562 (PPYQFERTRH…YSRVAKSLFT (304 aa)) folds into the PKS/mFAS DH domain. Histidine 1291 (proton acceptor; for dehydratase activity) is an active-site residue. The segment at 1297-1558 (APIAPATLLL…LGLRYSRVAK (262 aa)) is product template (PT) domain. The interval 1415–1562 (VDDILQGRNV…YSRVAKSLFT (148 aa)) is C-terminal hotdog fold. The Proton donor; for dehydratase activity role is filled by aspartate 1471. The Carrier domain occupies 1588 to 1662 (KDLVSRVKAV…DLVQAVQSAL (75 aa)). Serine 1622 carries the post-translational modification O-(pantetheine 4'-phosphoryl)serine. The interval 1822 to 2063 (REYPEYGGAS…YGHVDWTDGE (242 aa)) is methyltransferase (CMeT) domain. The segment at 2128 to 2366 (VTGATGSLGS…TPVDVAARII (239 aa)) is NADPH-binding domain.

The cofactor is pantetheine 4'-phosphate.

It catalyses the reaction decanoyl-[ACP] + 4 malonyl-CoA + AH2 + S-adenosyl-L-methionine + 3 H(+) = 2,4-dihydroxy-3-methyl-6-(2-oxoundecyl)benzaldehyde + holo-[ACP] + A + S-adenosyl-L-homocysteine + 4 CO2 + 4 CoA + H2O. It functions in the pathway secondary metabolite biosynthesis. Functionally, non-reducing polyketide synthase; part of the pki gene cluster that mediates the biosynthesis of 2,4-dihydroxy-3-methyl-6-(2-oxoundecyl)benzaldehyde. The first step in the pathway is the generation of the decanoyl starter unit by the FAS composed of subunits pkiB and pkiC, which is then transferred directly from the FAS to the SAT domain of the non-reducing polyketide synthase pkiA. PkiA condenses the decanoyyl starter unit with 4 malonyl-CoA units and performs one methylation step to yield 2,4-dihydroxy-3-methyl-6-(2-oxoundecyl)benzaldehyde. The polypeptide is Non-reducing polyketide synthase pkiA (Emericella nidulans (strain FGSC A4 / ATCC 38163 / CBS 112.46 / NRRL 194 / M139) (Aspergillus nidulans)).